The primary structure comprises 174 residues: uncharacterized protein (174 aa).

Positions 42–174 constitute an N-acetyltransferase domain; the sequence is SSNKNINLYE…GVKGMFWYPR (133 aa).

It belongs to the acetyltransferase family. Ycf52 subfamily.

It is found in the plastid. The protein resides in the chloroplast. This is an uncharacterized protein from Pyropia yezoensis (Susabi-nori).